Reading from the N-terminus, the 580-residue chain is Formate--tetrahydrofolate ligase (580 aa).

83 to 90 lines the ATP pocket; sequence TPMGEGKT.

The protein belongs to the formate--tetrahydrofolate ligase family.

It catalyses the reaction (6S)-5,6,7,8-tetrahydrofolate + formate + ATP = (6R)-10-formyltetrahydrofolate + ADP + phosphate. The protein operates within one-carbon metabolism; tetrahydrofolate interconversion. The chain is Formate--tetrahydrofolate ligase from Haloquadratum walsbyi (strain DSM 16790 / HBSQ001).